We begin with the raw amino-acid sequence, 201 residues long: 3-isopropylmalate dehydratase small subunit (201 aa).

This sequence belongs to the LeuD family. LeuD type 1 subfamily. In terms of assembly, heterodimer of LeuC and LeuD.

The catalysed reaction is (2R,3S)-3-isopropylmalate = (2S)-2-isopropylmalate. Its pathway is amino-acid biosynthesis; L-leucine biosynthesis; L-leucine from 3-methyl-2-oxobutanoate: step 2/4. Catalyzes the isomerization between 2-isopropylmalate and 3-isopropylmalate, via the formation of 2-isopropylmaleate. The chain is 3-isopropylmalate dehydratase small subunit from Shewanella sp. (strain ANA-3).